Reading from the N-terminus, the 836-residue chain is Zinc fingers and homeoboxes protein 2 (836 aa).

Residues 1-61 (MASKRKSTTP…EHSSKETEVV (61 aa)) are disordered. Positions 8 to 19 (TTPCMVRTSQVL) are enriched in polar residues. The interaction with EFNB1 stretch occupies residues 27-77 (ADRAKDKGAGMPQSDVTKDSWAAEPEHSSKETEVVEVKSMGENLSKKLQGG). The segment covering 50-61 (EPEHSSKETEVV) has biased composition (basic and acidic residues). A Glycyl lysine isopeptide (Lys-Gly) (interchain with G-Cter in SUMO2) cross-link involves residue Lys-64. C2H2-type zinc fingers lie at residues 78 to 101 (YECK…DMQH) and 110 to 133 (YVCA…SKFH). A disordered region spans residues 164–214 (PITASGPGSSDNDPGVSVGKTPMTKTGKLKADAKKVPKKPDEAAPENHMEG). Positions 192–214 (LKADAKKVPKKPDEAAPENHMEG) are enriched in basic and acidic residues. The segment at 195–358 (DAKKVPKKPD…PAQLTPTKVS (164 aa)) is required for homodimerization. 4 consecutive DNA-binding regions (homeobox) follow at residues 263-324 (NTTK…WSPE), 439-501 (TPAS…IVHI), 530-591 (PQKF…EQAV), and 628-690 (SPSS…TLSW). The tract at residues 263–446 (NTTKYNSALD…PLTPASDRKK (184 aa)) is required for repressor activity. Positions 263–497 (NTTKYNSALD…SDHRYRCQRG (235 aa)) are required for interaction with NFYA. The required for nuclear localization stretch occupies residues 317 to 446 (HGISWSPEEV…PLTPASDRKK (130 aa)). The tract at residues 404–442 (GQKRPLVTPQAAPEPKRPHIAQVPEPPPKVANTPLTPAS) is disordered. Residue Lys-455 forms a Glycyl lysine isopeptide (Lys-Gly) (interchain with G-Cter in SUMO2) linkage. 3 stretches are compositionally biased toward basic and acidic residues: residues 699-709 (MSDDRGRDAVS), 730-746 (YAKD…EKLV), and 813-824 (RVAEGTVERADS). The tract at residues 699–836 (MSDDRGRDAV…DSTPAEAGQA (138 aa)) is disordered. Phosphoserine occurs at positions 824 and 826.

Belongs to the ZHX family. In terms of assembly, homodimer (via homeobox domain 1). Heterodimer with ZHX1 (via homeobox domain 1). Heterodimer with ZHX3 (via homeobox domain 1). Heterodimerization with ZHX1 is not necessary for repressor activity. Interacts (via homeobox domain) with NFYA (via N-terminus). Interacts with EFNB1 intracellular domain peptide; the interaction enhances ZHX2 transcriptional repression activity. In terms of tissue distribution, expressed in retina where it localizes to Muller glial cells of the inner nuclear layer (at protein level). Detected in heart, brain, spleen, lung, liver, skeletal muscle, kidney and testis.

The protein resides in the nucleus. Its function is as follows. Acts as a transcriptional repressor. Represses the promoter activity of the CDC25C gene stimulated by NFYA. May play a role in retinal development where it regulates the composition of bipolar cell populations, by promoting differentiation of bipolar OFF-type cells. In the brain, may promote maintenance and suppress differentiation of neural progenitor cells in the developing cortex. The sequence is that of Zinc fingers and homeoboxes protein 2 (Zhx2) from Mus musculus (Mouse).